We begin with the raw amino-acid sequence, 1865 residues long: Endoribonuclease Dicer (1865 aa).

Positions 41 to 213 (LLEAALEHNT…DLEEKIQNLE (173 aa)) constitute a Helicase ATP-binding domain. 54–61 (LNTGSGKT) is a binding site for ATP. Residues 161–164 (DECH) carry the DECH box motif. Positions 397–417 (SWSDSEDDDEDEEAEAKEKTE) are disordered. A compositionally biased stretch (acidic residues) spans 400–411 (DSEDDDEDEEAE). The Helicase C-terminal domain maps to 419-588 (NFPSPFTNIL…SAECNDFELE (170 aa)). The Dicer dsRNA-binding fold domain maps to 616 to 708 (AIGHVNRYCA…MPVGKETVKY (93 aa)). The segment at 713-732 (DLHDEEETSVPGRPGSTKRR) is disordered. In terms of domain architecture, PAZ spans 881 to 1028 (KFMEDIEKSE…LVPELCAIHP (148 aa)). Composition is skewed to polar residues over residues 1111–1128 (GTSSDSNHTAPESCSMEV) and 1192–1201 (STQTTTSVSV). 2 disordered regions span residues 1111 to 1142 (GTSSDSNHTAPESCSMEVSQPPEGAPNTPDEK) and 1190 to 1259 (DLST…DCRS). Residues 1240–1252 (SETATSTPAPSET) are compositionally biased toward low complexity. The 124-residue stretch at 1262-1385 (AGPAWDSPKT…TDKWDSDENK (124 aa)) folds into the RNase III 1 domain. The Mg(2+) site is built by Glu-1298, Asp-1377, and Asp-1380. Residues 1373–1417 (KSSTDKWDSDENKDLANGKASDDEDEDDDDEPEEAEVEPSKEDVN) are disordered. Residues 1374-1388 (SSTDKWDSDENKDLA) show a composition bias toward basic and acidic residues. The segment covering 1394–1409 (DDEDEDDDDEPEEAEV) has biased composition (acidic residues). One can recognise an RNase III 2 domain in the interval 1609–1767 (FLNFESKINY…LAGAIYMDSG (159 aa)). Mg(2+)-binding residues include Glu-1648, Asp-1753, and Glu-1756. Positions 1792–1857 (VPRSPVRELL…ARRALRSLKA (66 aa)) constitute a DRBM domain.

Belongs to the helicase family. Dicer subfamily. In terms of assembly, component of the RISC loading complex (RLC), or micro-RNA (miRNA) loading complex (miRLC), which is composed of dicer1, ago2 and tarbp2; dicer1 and tarbp2 are required to process precursor miRNAs (pre-miRNAs) to mature miRNAs and then load them onto ago2. Note that the trimeric RLC/miRLC is also referred to as RISC. It depends on Mg(2+) as a cofactor. Requires Mn(2+) as cofactor.

The protein resides in the cytoplasm. It carries out the reaction Endonucleolytic cleavage to 5'-phosphomonoester.. Functionally, double-stranded RNA (dsRNA) endoribonuclease playing a central role in short dsRNA-mediated post-transcriptional gene silencing. Cleaves naturally occurring long dsRNAs and short hairpin pre-microRNAs (miRNA) into fragments of twenty-one to twenty-three nucleotides with 3' overhang of two nucleotides, producing respectively short interfering RNAs (siRNA) and mature microRNAs. SiRNAs and miRNAs serve as guide to direct the RNA-induced silencing complex (RISC) to complementary RNAs to degrade them or prevent their translation. Gene silencing mediated by siRNAs, also called RNA interference, controls the elimination of transcripts from mobile and repetitive DNA elements of the genome but also the degradation of exogenous RNA of viral origin for instance. The miRNA pathway on the other side is a mean to specifically regulate the expression of target genes. In Danio rerio (Zebrafish), this protein is Endoribonuclease Dicer (dicer1).